The chain runs to 280 residues: Ribonuclease Z (280 aa).

The Zn(2+) site is built by His61, His63, Asp65, His66, His153, Asp176, and His240. Asp65 functions as the Proton acceptor in the catalytic mechanism.

This sequence belongs to the RNase Z family. Homodimer. Requires Zn(2+) as cofactor.

It catalyses the reaction Endonucleolytic cleavage of RNA, removing extra 3' nucleotides from tRNA precursor, generating 3' termini of tRNAs. A 3'-hydroxy group is left at the tRNA terminus and a 5'-phosphoryl group is left at the trailer molecule.. Its function is as follows. Zinc phosphodiesterase, which displays some tRNA 3'-processing endonuclease activity. Probably involved in tRNA maturation, by removing a 3'-trailer from precursor tRNA. The polypeptide is Ribonuclease Z (Mycolicibacterium paratuberculosis (strain ATCC BAA-968 / K-10) (Mycobacterium paratuberculosis)).